Consider the following 251-residue polypeptide: Arginine and glutamate-rich protein 1-A (251 aa).

Residues 1-48 show a composition bias toward basic residues; sequence MGRSRSRSSSRSKHSKHSRKRSRSKSKSKKRSRSKEPKRNRRSRSRSG. The segment at 1 to 53 is necessary and sufficient for RNA binding; it reads MGRSRSRSSSRSKHSKHSRKRSRSKSKSKKRSRSKEPKRNRRSRSRSGSRRDR. Disordered stretches follow at residues 1-92 and 215-251; these read MGRS…ERQR and RMKLEQERQKQQKEEQKMILGKGKSRPRLSFSLKATE. 3 stretches are compositionally biased toward basic and acidic residues: residues 49 to 63, 71 to 92, and 215 to 231; these read SRRDRGGSPPDRTDM, RNNDEKQKREEEDRRVEIERQR, and RMKLEQERQKQQKEEQK. The interval 54-251 is necessary and sufficient for transcriptional regulation; sequence GGSPPDRTDM…RLSFSLKATE (198 aa).

This sequence belongs to the ARGLU1 family.

It localises to the nucleus. Its subcellular location is the nucleus speckle. It is found in the chromosome. In terms of biological role, dual function regulator of gene expression; regulator of transcription and modulator of alternative splicing. General coactivator of nuclear receptor-induced gene expression. This Danio rerio (Zebrafish) protein is Arginine and glutamate-rich protein 1-A (arglu1a).